A 216-amino-acid polypeptide reads, in one-letter code: ADP-ribosylation factor D (216 aa).

Low complexity predominate over residues 188 to 204; sequence SKFSFSNKSKQQKSNSQ. The segment at 188–216 is disordered; it reads SKFSFSNKSKQQKSNSQPNTPRKNIQMMT. Residues 205–216 show a composition bias toward polar residues; the sequence is PNTPRKNIQMMT.

The protein belongs to the small GTPase superfamily. Arf family.

The protein localises to the golgi apparatus. GTP-binding protein involved in protein trafficking; may modulate vesicle budding and uncoating within the Golgi apparatus. The sequence is that of ADP-ribosylation factor D (arrD) from Dictyostelium discoideum (Social amoeba).